The chain runs to 143 residues: uncharacterized protein (143 aa).

This is an uncharacterized protein from Thermoproteus tenax virus 1 (strain KRA1) (TTV1).